The sequence spans 208 residues: 3-demethoxyubiquinol 3-hydroxylase (208 aa).

Residues Glu57, Glu87, His90, Glu139, Glu171, and His174 each coordinate Fe cation.

This sequence belongs to the COQ7 family. Fe cation serves as cofactor.

Its subcellular location is the cell membrane. It catalyses the reaction a 5-methoxy-2-methyl-3-(all-trans-polyprenyl)benzene-1,4-diol + AH2 + O2 = a 3-demethylubiquinol + A + H2O. The protein operates within cofactor biosynthesis; ubiquinone biosynthesis. Functionally, catalyzes the hydroxylation of 2-nonaprenyl-3-methyl-6-methoxy-1,4-benzoquinol during ubiquinone biosynthesis. In Janthinobacterium sp. (strain Marseille) (Minibacterium massiliensis), this protein is 3-demethoxyubiquinol 3-hydroxylase.